The sequence spans 288 residues: Shikimate kinase (288 aa).

ATP is bound at residue 81–91; sequence PVASGLKSSSA.

Belongs to the GHMP kinase family. Archaeal shikimate kinase subfamily.

It localises to the cytoplasm. It carries out the reaction shikimate + ATP = 3-phosphoshikimate + ADP + H(+). It participates in metabolic intermediate biosynthesis; chorismate biosynthesis; chorismate from D-erythrose 4-phosphate and phosphoenolpyruvate: step 5/7. The chain is Shikimate kinase from Methanothrix thermoacetophila (strain DSM 6194 / JCM 14653 / NBRC 101360 / PT) (Methanosaeta thermophila).